We begin with the raw amino-acid sequence, 264 residues long: Phosphonoacetaldehyde hydrolase (264 aa).

D9 acts as the Nucleophile in catalysis. Residues D9 and A11 each coordinate Mg(2+). K50 serves as the catalytic Schiff-base intermediate with substrate. Residue D183 participates in Mg(2+) binding.

The protein belongs to the HAD-like hydrolase superfamily. PhnX family. As to quaternary structure, homodimer. Requires Mg(2+) as cofactor.

It catalyses the reaction phosphonoacetaldehyde + H2O = acetaldehyde + phosphate + H(+). Its function is as follows. Involved in phosphonate degradation. The protein is Phosphonoacetaldehyde hydrolase of Bacillus mycoides (strain KBAB4) (Bacillus weihenstephanensis).